A 1411-amino-acid chain; its full sequence is Zinc finger protein 609 (1411 aa).

Disordered regions lie at residues 1-26, 47-190, 353-484, 517-659, 679-963, 1005-1125, 1153-1221, and 1270-1367; these read MSLS…SGDE, QKLE…QPVP, PRFC…EPTV, AHAH…ARPI, ASPG…VIQQ, YEEQ…RQAE, KSED…LTQH, and GSKV…STHH. Serine 358, serine 361, and serine 379 each carry phosphoserine. Positions 377–401 are enriched in polar residues; sequence PNSNTPVNETATASDSKGTSNSSKT. Position 381 is a phosphothreonine (threonine 381). Phosphoserine is present on residues serine 413, serine 433, serine 446, serine 452, serine 467, and serine 470. A compositionally biased stretch (polar residues) spans 423 to 437; it reads ASSTSEDVKASPSSA. A Glycyl lysine isopeptide (Lys-Gly) (interchain with G-Cter in SUMO2) cross-link involves residue lysine 479. Residues 495-520 form a C2H2-type zinc finger; sequence IDCPHPNCNKKYKHINGLKYHQAHAH. The segment covering 519-529 has biased composition (basic and acidic residues); sequence AHTDDDSKPEA. Serine 533 is modified (phosphoserine). Residues 549 to 563 are compositionally biased toward polar residues; sequence NGASVSQKGSLSPAR. 2 positions are modified to phosphoserine: serine 576 and serine 578. Basic and acidic residues predominate over residues 626 to 649; it reads SLERKCMEKEKCKKPSSLKPEKIP. The span at 679-700 shows a compositional bias: polar residues; sequence ASPGSSSGLTATVAQAMPNSPQ. Residues 726 to 736 show a composition bias toward basic residues; the sequence is DKKKKDKKKKE. At serine 743 the chain carries Phosphoserine. Phosphothreonine is present on threonine 746. Basic and acidic residues predominate over residues 751 to 764; sequence CRAEEGKSPFRESS. Position 758 is a phosphoserine (serine 758). A Glycyl lysine isopeptide (Lys-Gly) (interchain with G-Cter in SUMO2) cross-link involves residue lysine 789. Positions 798-844 are enriched in polar residues; sequence FTDNAPSPSIGGSSRLENTTPTQPLTPLHVVTQNGAEASSVKTNSPA. Serine 804 carries the phosphoserine modification. Threonine 823 carries the phosphothreonine modification. Residues serine 842, serine 846, and serine 849 each carry the phosphoserine modification. The span at 855 to 876 shows a compositional bias: basic and acidic residues; the sequence is GEGKVDSVKSKDAEQLVKEGAK. A compositionally biased stretch (low complexity) spans 897-908; the sequence is SYYSPSYAQSSP. A compositionally biased stretch (basic and acidic residues) spans 926 to 950; that stretch reads TKRDEEPESIEGKVKNDICEEKKPE. Low complexity predominate over residues 952–963; the sequence is SSSSQQPSVIQQ. Over residues 1020–1042 the composition is skewed to basic and acidic residues; it reads GVDKKAEMGLKEREAALKEEWKQ. Serine 1055 carries the phosphoserine modification. Residue lysine 1061 forms a Glycyl lysine isopeptide (Lys-Gly) (interchain with G-Cter in SUMO2) linkage. Basic and acidic residues-rich tracts occupy residues 1097 to 1113, 1153 to 1187, and 1195 to 1208; these read LKVK…EASE, KSED…KEST, and TSEE…EPRP. Lysine 1153 is covalently cross-linked (Glycyl lysine isopeptide (Lys-Gly) (interchain with G-Cter in SUMO2)). Positions 1286 to 1296 are enriched in polar residues; that stretch reads PSVTCKSSSES. A Glycyl lysine isopeptide (Lys-Gly) (interchain with G-Cter in SUMO2) cross-link involves residue lysine 1297. The segment covering 1328–1337 has biased composition (gly residues); sequence GCGVVGGGGS.

As to quaternary structure, interacts (via N-terminus) with NIPBL. Interacts with INTS13; promoting association with the integrator complex. As to expression, isoform 1: Expressed in myoblasts and myotubes. Isoform 2: Expressed in myoblasts and myotubes, with a preference in undifferentiated myoblasts.

The protein localises to the nucleus. Functionally, transcription factor, which activates RAG1, and possibly RAG2, transcription. Through the regulation of RAG1/2 expression, may regulate thymocyte maturation. Along with NIPBL and the multiprotein complex Integrator, promotes cortical neuron migration during brain development by regulating the transcription of crucial genes in this process. Preferentially binds promoters containing paused RNA polymerase II. Up-regulates the expression of SEMA3A, NRP1, PLXND1 and GABBR2 genes, among others. In terms of biological role, involved in the regulation of myoblast proliferation during myogenesis. This chain is Zinc finger protein 609, found in Homo sapiens (Human).